A 502-amino-acid chain; its full sequence is ATP synthase subunit alpha (502 aa).

Residues 114-139 (PIDGRGPIETSKTRPIESPAPGVMDR) form a disordered region. 169–176 (GDRQTGKT) contributes to the ATP binding site.

The protein belongs to the ATPase alpha/beta chains family. As to quaternary structure, F-type ATPases have 2 components, CF(1) - the catalytic core - and CF(0) - the membrane proton channel. CF(1) has five subunits: alpha(3), beta(3), gamma(1), delta(1), epsilon(1). CF(0) has three main subunits: a(1), b(2) and c(9-12). The alpha and beta chains form an alternating ring which encloses part of the gamma chain. CF(1) is attached to CF(0) by a central stalk formed by the gamma and epsilon chains, while a peripheral stalk is formed by the delta and b chains.

It localises to the cell membrane. The enzyme catalyses ATP + H2O + 4 H(+)(in) = ADP + phosphate + 5 H(+)(out). Produces ATP from ADP in the presence of a proton gradient across the membrane. The alpha chain is a regulatory subunit. The polypeptide is ATP synthase subunit alpha (Halalkalibacterium halodurans (strain ATCC BAA-125 / DSM 18197 / FERM 7344 / JCM 9153 / C-125) (Bacillus halodurans)).